The sequence spans 965 residues: Pullulanase 1, chloroplastic (965 aa).

A chloroplast-targeting transit peptide spans 1-62 (MALTLTPTSS…SKTSLHCLCS (62 aa)). Aspartate 552 functions as the Nucleophile in the catalytic mechanism. Glutamate 589 functions as the Proton donor in the catalytic mechanism.

The protein belongs to the glycosyl hydrolase 13 family.

Its subcellular location is the plastid. It localises to the chloroplast stroma. It catalyses the reaction Hydrolysis of (1-&gt;6)-alpha-D-glucosidic linkages in alpha- and beta-limit dextrins of amylopectin and glycogen, and in amylopectin and pullulan.. It participates in glycan biosynthesis; starch biosynthesis. Its pathway is glycan degradation; starch degradation. Its function is as follows. Involved in starch degradation and also probably in the trimming of pre-amylopectin chains during starch synthesis. The protein is Pullulanase 1, chloroplastic (PU1) of Arabidopsis thaliana (Mouse-ear cress).